Reading from the N-terminus, the 433-residue chain is Transcription factor TCP18 (433 aa).

2 disordered regions span residues 130-163 (QRIS…GTRD) and 247-281 (DDRG…RTPI). The region spanning 148-206 (RTDRHSKIKTAKGTRDRRMRLSLDVAKELFGLQDMLGFDKASKTVEWLLTQAKPEIIKI) is the TCP domain. In terms of domain architecture, R spans 287 to 304 (KEERAKARERAKGRTMEK).

As to expression, expressed in unelongated axillary buds, and, to a lower extent, in axillary structures such as flowers and siliques.

It localises to the nucleus. Functionally, transcription factor that prevents axillary bud outgrowth and delays early axillary bud development. Indirectly required for the auxin-induced control of apical dominance. The sequence is that of Transcription factor TCP18 from Arabidopsis thaliana (Mouse-ear cress).